The primary structure comprises 716 residues: Probable extracellular serine carboxypeptidase (716 aa).

The first 17 residues, 1–17 (MVKLTACLLLLVAAVQA), serve as a signal peptide directing secretion. Residues N143 and N174 are each glycosylated (N-linked (GlcNAc...) asparagine). The Charge relay system role is filled by S188. N258 and N354 each carry an N-linked (GlcNAc...) asparagine glycan. The active-site Charge relay system is the D466. Residues N507 and N550 are each glycosylated (N-linked (GlcNAc...) asparagine). The segment at 617–636 (RDLAAQPSKSKKDRRGQQLS) is disordered. Residues 652–672 (LGFVSFLVFAFSSFTFIPDIE) traverse the membrane as a helical segment.

It belongs to the peptidase S28 family.

It localises to the membrane. It is found in the secreted. The chain is Probable extracellular serine carboxypeptidase from Arthroderma benhamiae (strain ATCC MYA-4681 / CBS 112371) (Trichophyton mentagrophytes).